The chain runs to 72 residues: Translational regulator CsrA (72 aa).

Belongs to the CsrA/RsmA family. As to quaternary structure, homodimer; the beta-strands of each monomer intercalate to form a hydrophobic core, while the alpha-helices form wings that extend away from the core.

It is found in the cytoplasm. Functionally, a translational regulator that binds mRNA to regulate translation initiation and/or mRNA stability. Usually binds in the 5'-UTR at or near the Shine-Dalgarno sequence preventing ribosome-binding, thus repressing translation. Its main target seems to be the major flagellin gene, while its function is anatagonized by FliW. In Clostridium botulinum (strain Okra / Type B1), this protein is Translational regulator CsrA.